Consider the following 93-residue polypeptide: Small ribosomal subunit protein uS19 (93 aa).

Belongs to the universal ribosomal protein uS19 family.

Functionally, protein S19 forms a complex with S13 that binds strongly to the 16S ribosomal RNA. The protein is Small ribosomal subunit protein uS19 of Limosilactobacillus fermentum (strain NBRC 3956 / LMG 18251) (Lactobacillus fermentum).